We begin with the raw amino-acid sequence, 249 residues long: tRNA (guanine-N(1)-)-methyltransferase (249 aa).

Residues Gly-113 and 132–137 each bind S-adenosyl-L-methionine; that span reads VGDFVV.

It belongs to the RNA methyltransferase TrmD family. As to quaternary structure, homodimer.

It localises to the cytoplasm. The catalysed reaction is guanosine(37) in tRNA + S-adenosyl-L-methionine = N(1)-methylguanosine(37) in tRNA + S-adenosyl-L-homocysteine + H(+). Functionally, specifically methylates guanosine-37 in various tRNAs. The polypeptide is tRNA (guanine-N(1)-)-methyltransferase (Desulforudis audaxviator (strain MP104C)).